The sequence spans 346 residues: DNA polymerase IV 2 (346 aa).

The UmuC domain maps to 9–191 (ILHVDLDQFL…RTVEALWGVG (183 aa)). Positions 13 and 111 each coordinate Mg(2+). Residue E112 is part of the active site.

The protein belongs to the DNA polymerase type-Y family. In terms of assembly, monomer. Mg(2+) is required as a cofactor.

The protein resides in the cytoplasm. The enzyme catalyses DNA(n) + a 2'-deoxyribonucleoside 5'-triphosphate = DNA(n+1) + diphosphate. In terms of biological role, poorly processive, error-prone DNA polymerase involved in untargeted mutagenesis. Copies undamaged DNA at stalled replication forks, which arise in vivo from mismatched or misaligned primer ends. These misaligned primers can be extended by PolIV. Exhibits no 3'-5' exonuclease (proofreading) activity. May be involved in translesional synthesis, in conjunction with the beta clamp from PolIII. This chain is DNA polymerase IV 2 (dinB2), found in Mycobacterium bovis (strain ATCC BAA-935 / AF2122/97).